A 374-amino-acid chain; its full sequence is Chaperone protein DnaJ (374 aa).

Positions 5–70 constitute a J domain; sequence DYYEVLGVSK…QKRAAYDQYG (66 aa). The CR-type zinc-finger motif lies at 132–210; that stretch reads GTTVKIRVPT…CHGHGRVEET (79 aa). Zn(2+)-binding residues include cysteine 145, cysteine 148, cysteine 162, cysteine 165, cysteine 184, cysteine 187, cysteine 198, and cysteine 201. 4 CXXCXGXG motif repeats span residues 145–152, 162–169, 184–191, and 198–205; these read CKPCGGSG, CTTCGGHG, CPNCRGQG, and CKECHGHG.

The protein belongs to the DnaJ family. In terms of assembly, homodimer. Requires Zn(2+) as cofactor.

Its subcellular location is the cytoplasm. Its function is as follows. Participates actively in the response to hyperosmotic and heat shock by preventing the aggregation of stress-denatured proteins and by disaggregating proteins, also in an autonomous, DnaK-independent fashion. Unfolded proteins bind initially to DnaJ; upon interaction with the DnaJ-bound protein, DnaK hydrolyzes its bound ATP, resulting in the formation of a stable complex. GrpE releases ADP from DnaK; ATP binding to DnaK triggers the release of the substrate protein, thus completing the reaction cycle. Several rounds of ATP-dependent interactions between DnaJ, DnaK and GrpE are required for fully efficient folding. Also involved, together with DnaK and GrpE, in the DNA replication of plasmids through activation of initiation proteins. This Saccharophagus degradans (strain 2-40 / ATCC 43961 / DSM 17024) protein is Chaperone protein DnaJ.